We begin with the raw amino-acid sequence, 239 residues long: tRNA (guanine-N(7)-)-methyltransferase (239 aa).

Over residues 1–13 (MEAEVQQGQQSPE) the composition is skewed to polar residues. The segment at 1–30 (MEAEVQQGQQSPEGQLEKRPPSPPWAGIPL) is disordered. S-adenosyl-L-methionine-binding residues include aspartate 72, glutamate 97, asparagine 124, and aspartate 147. The active site involves aspartate 147. Residues lysine 151 and aspartate 183 each coordinate substrate.

It belongs to the class I-like SAM-binding methyltransferase superfamily. TrmB family.

It carries out the reaction guanosine(46) in tRNA + S-adenosyl-L-methionine = N(7)-methylguanosine(46) in tRNA + S-adenosyl-L-homocysteine. It participates in tRNA modification; N(7)-methylguanine-tRNA biosynthesis. Functionally, catalyzes the formation of N(7)-methylguanine at position 46 (m7G46) in tRNA. This is tRNA (guanine-N(7)-)-methyltransferase from Synechococcus sp. (strain JA-2-3B'a(2-13)) (Cyanobacteria bacterium Yellowstone B-Prime).